Reading from the N-terminus, the 500-residue chain is 4-aminobutyrate aminotransferase, mitochondrial (500 aa).

A mitochondrion-targeting transit peptide spans 1-28 (MAFLLITRRLACSSQKNLHLFIPGSRYI). Cysteine 163 provides a ligand contact to [2Fe-2S] cluster. 164–165 (GS) provides a ligand contact to pyridoxal 5'-phosphate. Cysteine 166 is a [2Fe-2S] cluster binding site. Arginine 220 contacts substrate. Lysine 231 bears the N6-succinyllysine mark. Lysine 252 carries the N6-acetyllysine; alternate modification. Lysine 252 is modified (N6-succinyllysine; alternate). Residues lysine 279 and lysine 318 each carry the N6-acetyllysine modification. Lysine 357 is modified (N6-(pyridoxal phosphate)lysine). Threonine 381 is a pyridoxal 5'-phosphate binding site. Lysine 413 bears the N6-acetyllysine; alternate mark. N6-succinyllysine; alternate is present on lysine 413. Residues lysine 452 and lysine 470 each carry the N6-acetyllysine modification.

This sequence belongs to the class-III pyridoxal-phosphate-dependent aminotransferase family. As to quaternary structure, homodimer; disulfide-linked. Requires pyridoxal 5'-phosphate as cofactor. [2Fe-2S] cluster serves as cofactor.

It is found in the mitochondrion matrix. It catalyses the reaction 4-aminobutanoate + 2-oxoglutarate = succinate semialdehyde + L-glutamate. It carries out the reaction (S)-3-amino-2-methylpropanoate + 2-oxoglutarate = 2-methyl-3-oxopropanoate + L-glutamate. Its function is as follows. Catalyzes the conversion of gamma-aminobutyrate and L-beta-aminoisobutyrate to succinate semialdehyde and methylmalonate semialdehyde, respectively. Can also convert delta-aminovalerate and beta-alanine. The sequence is that of 4-aminobutyrate aminotransferase, mitochondrial from Mus musculus (Mouse).